A 364-amino-acid polypeptide reads, in one-letter code: Aminomethyltransferase (364 aa).

The protein belongs to the GcvT family. As to quaternary structure, the glycine cleavage system is composed of four proteins: P, T, L and H.

It carries out the reaction N(6)-[(R)-S(8)-aminomethyldihydrolipoyl]-L-lysyl-[protein] + (6S)-5,6,7,8-tetrahydrofolate = N(6)-[(R)-dihydrolipoyl]-L-lysyl-[protein] + (6R)-5,10-methylene-5,6,7,8-tetrahydrofolate + NH4(+). Its function is as follows. The glycine cleavage system catalyzes the degradation of glycine. This is Aminomethyltransferase from Shewanella halifaxensis (strain HAW-EB4).